We begin with the raw amino-acid sequence, 243 residues long: Mannosyl-3-phosphoglycerate phosphatase (243 aa).

The active-site Nucleophile is D8. 4 residues coordinate Mg(2+): D8, D10, S169, and D204.

It belongs to the HAD-like hydrolase superfamily. MPGP family. It depends on Mg(2+) as a cofactor.

It is found in the cytoplasm. It carries out the reaction 2-O-(alpha-D-mannosyl)-3-phosphoglycerate + H2O = (2R)-2-O-(alpha-D-mannosyl)-glycerate + phosphate. Its pathway is carbohydrate biosynthesis; 2-(alpha-D-mannosyl)-D-glycerate biosynthesis; 2-(alpha-D-mannosyl)-D-glycerate from GDP-alpha-D-mannose (MPG route): step 2/2. Hydrolyzes mannosyl-3-phosphoglycerate (MPG) to form the osmolyte mannosylglycerate (MG). The enzyme is absolutely specific for MPG. The sequence is that of Mannosyl-3-phosphoglycerate phosphatase from Pyrococcus horikoshii (strain ATCC 700860 / DSM 12428 / JCM 9974 / NBRC 100139 / OT-3).